Consider the following 822-residue polypeptide: Valine--tRNA ligase (822 aa).

A 'HIGH' region motif is present at residues 41–51; that stretch reads PNVTGQLHLGH. The 'KMSKS' region motif lies at 511–515; that stretch reads KMSKS. An ATP-binding site is contributed by K514. The stretch at 765 to 822 forms a coiled coil; that stretch reads EQKGRELKEIQFLKSEILRAEKILTNKGFLEKAPREKIDLERTKLEKLKEKLAFYEKK.

The protein belongs to the class-I aminoacyl-tRNA synthetase family. ValS type 1 subfamily. As to quaternary structure, monomer.

It is found in the cytoplasm. It catalyses the reaction tRNA(Val) + L-valine + ATP = L-valyl-tRNA(Val) + AMP + diphosphate. In terms of biological role, catalyzes the attachment of valine to tRNA(Val). As ValRS can inadvertently accommodate and process structurally similar amino acids such as threonine, to avoid such errors, it has a 'posttransfer' editing activity that hydrolyzes mischarged Thr-tRNA(Val) in a tRNA-dependent manner. This is Valine--tRNA ligase from Mesomycoplasma hyopneumoniae (strain 7448) (Mycoplasma hyopneumoniae).